Consider the following 418-residue polypeptide: Tyrosine--tRNA ligase (418 aa).

Residue tyrosine 34 coordinates L-tyrosine. The 'HIGH' region motif lies at 39 to 48; it reads PTADSLHLGH. L-tyrosine-binding residues include tyrosine 169 and glutamine 173. The short motif at 229–233 is the 'KMSKS' region element; that stretch reads KFGKS. Lysine 232 serves as a coordination point for ATP. The region spanning 352 to 418 is the S4 RNA-binding domain; the sequence is LNIVDMLVTA…GKKKYAVLTY (67 aa).

Belongs to the class-I aminoacyl-tRNA synthetase family. TyrS type 1 subfamily. Homodimer.

Its subcellular location is the cytoplasm. It carries out the reaction tRNA(Tyr) + L-tyrosine + ATP = L-tyrosyl-tRNA(Tyr) + AMP + diphosphate + H(+). Catalyzes the attachment of tyrosine to tRNA(Tyr) in a two-step reaction: tyrosine is first activated by ATP to form Tyr-AMP and then transferred to the acceptor end of tRNA(Tyr). The sequence is that of Tyrosine--tRNA ligase from Streptococcus equi subsp. zooepidemicus (strain MGCS10565).